The sequence spans 418 residues: Histidinol dehydrogenase (418 aa).

Residues Tyr-119, Gln-180, and Asn-203 each coordinate NAD(+). Substrate is bound by residues Thr-226, Gln-248, and His-251. Zn(2+) contacts are provided by Gln-248 and His-251. Residues Glu-316 and His-317 each act as proton acceptor in the active site. Positions 317, 350, 404, and 409 each coordinate substrate. Asp-350 is a binding site for Zn(2+). His-409 provides a ligand contact to Zn(2+).

It belongs to the histidinol dehydrogenase family. Requires Zn(2+) as cofactor.

It carries out the reaction L-histidinol + 2 NAD(+) + H2O = L-histidine + 2 NADH + 3 H(+). Its pathway is amino-acid biosynthesis; L-histidine biosynthesis; L-histidine from 5-phospho-alpha-D-ribose 1-diphosphate: step 9/9. In terms of biological role, catalyzes the sequential NAD-dependent oxidations of L-histidinol to L-histidinaldehyde and then to L-histidine. The protein is Histidinol dehydrogenase of Staphylococcus aureus (strain MSSA476).